A 331-amino-acid polypeptide reads, in one-letter code: DNA-directed RNA polymerase subunit alpha (331 aa).

Residues 1–246 (MMQTSRTLHN…GLFSPLQEVS (246 aa)) are alpha N-terminal domain (alpha-NTD). The segment at 256-331 (AEDNQKNQIP…LTLPRERSKT (76 aa)) is alpha C-terminal domain (alpha-CTD).

This sequence belongs to the RNA polymerase alpha chain family. In terms of assembly, in cyanobacteria the RNAP catalytic core is composed of 2 alpha, 1 beta, 1 beta', 1 gamma and 1 omega subunit. When a sigma factor is associated with the core the holoenzyme is formed, which can initiate transcription.

The enzyme catalyses RNA(n) + a ribonucleoside 5'-triphosphate = RNA(n+1) + diphosphate. In terms of biological role, DNA-dependent RNA polymerase catalyzes the transcription of DNA into RNA using the four ribonucleoside triphosphates as substrates. The chain is DNA-directed RNA polymerase subunit alpha from Synechococcus sp. (strain JA-3-3Ab) (Cyanobacteria bacterium Yellowstone A-Prime).